A 519-amino-acid polypeptide reads, in one-letter code: Cytochrome P450 88A1 (519 aa).

Residues 1-21 (MLGVGMAAAVLLGAVALLLAD) traverse the membrane as a helical segment. Residue Cys466 coordinates heme.

Belongs to the cytochrome P450 family. Heme serves as cofactor. In terms of tissue distribution, expressed in roots, developing leaves, the vegetative meristem, and suspension culture cells.

The protein localises to the membrane. It participates in plant hormone biosynthesis; gibberellin biosynthesis. The polypeptide is Cytochrome P450 88A1 (CYP88A1) (Zea mays (Maize)).